The primary structure comprises 209 residues: Virulence factors putative positive transcription regulator BvgA (209 aa).

The 116-residue stretch at 4-119 (KVLIIDDHPV…EVINAAKAVM (116 aa)) folds into the Response regulatory domain. At D54 the chain carries 4-aspartylphosphate. An HTH luxR-type domain is found at 142-207 (DSTLISVLSN…ELIDLAKRNN (66 aa)). The segment at residues 166–185 (NKDIADSMFLSNKTVSTYKT) is a DNA-binding region (H-T-H motif).

In terms of assembly, homodimer. Post-translationally, phosphorylated by BvgS.

Functionally, member of the two-component regulatory system BvgS/BvgA. Activates the transcription of virulence genes. In Bordetella bronchiseptica (strain ATCC BAA-588 / NCTC 13252 / RB50) (Alcaligenes bronchisepticus), this protein is Virulence factors putative positive transcription regulator BvgA (bvgA).